We begin with the raw amino-acid sequence, 57 residues long: uncharacterized protein (57 aa).

Residues 24 to 44 (LWVTLLLTMFFTAVEIIGGLI) form a helical membrane-spanning segment.

This sequence to cation A.eutrophus efflux system protein CzcD.

It is found in the cell membrane. This is an uncharacterized protein from Bacillus caldolyticus.